Reading from the N-terminus, the 276-residue chain is Malonyl-[acyl-carrier protein] O-methyltransferase (276 aa).

The protein belongs to the methyltransferase superfamily.

It carries out the reaction malonyl-[ACP] + S-adenosyl-L-methionine = malonyl-[ACP] methyl ester + S-adenosyl-L-homocysteine. The protein operates within cofactor biosynthesis; biotin biosynthesis. In terms of biological role, converts the free carboxyl group of a malonyl-thioester to its methyl ester by transfer of a methyl group from S-adenosyl-L-methionine (SAM). It allows to synthesize pimeloyl-ACP via the fatty acid synthetic pathway. This is Malonyl-[acyl-carrier protein] O-methyltransferase from Paenibacillus sp. (strain JDR-2).